Consider the following 1038-residue polypeptide: Subtilisin-like protease SBT6.1 (1038 aa).

The N-terminal stretch at 1 to 30 (MKVLGEASSYPYRSCIIVVFLSVSLFWLRP) is a signal peptide. The propeptide at 31 to 181 (STYHPQQQNL…TTLNWSRHLL (151 aa)) is removed in mature form. N-linked (GlcNAc...) asparagine glycans are attached at residues asparagine 44, asparagine 52, asparagine 171, and asparagine 175. In terms of domain architecture, Peptidase S8 spans 175-473 (NWSRHLLAQK…VDLLESYEIL (299 aa)). Residues 182–1000 (AQKTQVTSMF…IDMPFLVPTR (819 aa)) are Lumenal-facing. The active-site Charge relay system is the aspartate 212. N-linked (GlcNAc...) asparagine glycosylation is present at asparagine 230. Histidine 243 acts as the Charge relay system in catalysis. Asparagine 300 carries an N-linked (GlcNAc...) asparagine glycan. Catalysis depends on serine 409, which acts as the Charge relay system. Asparagine 513, asparagine 579, asparagine 902, and asparagine 954 each carry an N-linked (GlcNAc...) asparagine glycan. Residues 1001-1021 (WIVLAGVVASGVLVLLSIWRI) traverse the membrane as a helical segment. Topologically, residues 1022-1038 (RQKRGRRRRASGSNRLA) are cytoplasmic.

This sequence belongs to the peptidase S8 family. In terms of assembly, interacts with PME1 and PME5. As to expression, expressed in the vasculature of roots, cotyledons and leaves.

The protein localises to the golgi apparatus membrane. Functionally, serine protease that catalyzes the first step (site-1 cleavage) in the proteolytic activation of various factors, prior to site-2 cleavage. Part of a regulated intramembrane proteolysis (RIP) cascade. Cleaves BZIP17 and BZIP28 after the Arg-Arg-Ile-Leu (RRIL) motif. May cleave BZIP49 after the RRIL motif. Targets the membrane-associated BZIP17 factor, which functions as a stress sensor and transducer in a signaling pathway that resembles an ER stress response. Following salt stress, BZIP17 is cleaved by SBT6.1 (S1P) and S2P at the C-terminus and the N-terminal bZIP component is translocated to the nucleus, where it activates the expression of salt stress response genes. Cleaves the pectinesterases PME1 after the Arg-Arg-Leu-Met (RRLM) and Arg-Arg-Leu-Leu (RRLL) motifs, and PME5 after the Arg-Arg-Leu-Leu (RRLL) and Arg-Lys-Leu-Met (RKLM) motifs. This processing and C-terminus release occurs in the Golgi apparatus and is required for cell wall targeting of pectinesterases. Thus, SBT6.1 mediates the regulated release of mature pectinesterases from the Golgi. Cleaves the peptide growth factor RALF23 after the Arg-Arg-Ile-Leu (RRIL) motif. This processing is required for RALF23 function in the negative regulation of brassinolide (BL)-mediated signaling pathway (e.g. BL-induced hypocotyl elongation and branching limitation). In Arabidopsis thaliana (Mouse-ear cress), this protein is Subtilisin-like protease SBT6.1.